Consider the following 404-residue polypeptide: Phosphopentomutase (404 aa).

Mn(2+)-binding residues include Asp10, Asp303, His308, Asp344, His345, and His356.

This sequence belongs to the phosphopentomutase family. Mn(2+) serves as cofactor.

The protein resides in the cytoplasm. The catalysed reaction is 2-deoxy-alpha-D-ribose 1-phosphate = 2-deoxy-D-ribose 5-phosphate. It carries out the reaction alpha-D-ribose 1-phosphate = D-ribose 5-phosphate. The protein operates within carbohydrate degradation; 2-deoxy-D-ribose 1-phosphate degradation; D-glyceraldehyde 3-phosphate and acetaldehyde from 2-deoxy-alpha-D-ribose 1-phosphate: step 1/2. Isomerase that catalyzes the conversion of deoxy-ribose 1-phosphate (dRib-1-P) and ribose 1-phosphate (Rib-1-P) to deoxy-ribose 5-phosphate (dRib-5-P) and ribose 5-phosphate (Rib-5-P), respectively. This chain is Phosphopentomutase, found in Shewanella sp. (strain MR-7).